A 274-amino-acid chain; its full sequence is Nickel/cobalt efflux system RcnA (274 aa).

Topologically, residues 1–12 are periplasmic; the sequence is MTEFTTLLQQGN. Residues 13–33 traverse the membrane as a helical segment; it reads AWFFIPSAILLGALHGLEPGH. Residues 34–56 are Cytoplasmic-facing; sequence SKTMMAAFIIAIKGTIKQAVMLG. Residues 57–77 form a helical membrane-spanning segment; it reads LAATISHTAVVWLIAFGGMVI. Over 78–86 the chain is Periplasmic; that stretch reads SKRFTAQSA. The helical transmembrane segment at 87–107 threads the bilayer; it reads EPWLQLISAVIIISTAFWMFW. Over 108-175 the chain is Cytoplasmic; that stretch reads RTWRGERNWL…DGREVTNWQI (68 aa). A disordered region spans residues 127-153; that stretch reads HHHHDHEHHHDHGHHHHHEHGEYQDAH. The segment covering 129-144 has biased composition (basic residues); that stretch reads HHDHEHHHDHGHHHHH. Residues 176–196 form a helical membrane-spanning segment; it reads LLFGLTGGLIPCPAAITVLLI. The Periplasmic portion of the chain corresponds to 197-209; the sequence is CIQLKALTLGATL. Residues 210–230 form a helical membrane-spanning segment; sequence VVSFSIGLALTLVTVGVGAAI. Residues 231-251 lie on the Cytoplasmic side of the membrane; sequence SVQQVAKRWSGFNTLAKRAPY. Residues 252 to 272 traverse the membrane as a helical segment; it reads FSSLLIGLVGVYMGVHGFMGI. At 273 to 274 the chain is on the periplasmic side; it reads MR.

This sequence belongs to the NiCoT transporter (TC 2.A.52) family. RcnA subfamily.

Its subcellular location is the cell inner membrane. Its function is as follows. Efflux system for nickel and cobalt. The polypeptide is Nickel/cobalt efflux system RcnA (rcnA) (Escherichia coli (strain K12)).